Reading from the N-terminus, the 468-residue chain is 3-isopropylmalate dehydratase large subunit (468 aa).

Residues C347, C407, and C410 each coordinate [4Fe-4S] cluster.

The protein belongs to the aconitase/IPM isomerase family. LeuC type 1 subfamily. Heterodimer of LeuC and LeuD. It depends on [4Fe-4S] cluster as a cofactor.

It carries out the reaction (2R,3S)-3-isopropylmalate = (2S)-2-isopropylmalate. It participates in amino-acid biosynthesis; L-leucine biosynthesis; L-leucine from 3-methyl-2-oxobutanoate: step 2/4. Its function is as follows. Catalyzes the isomerization between 2-isopropylmalate and 3-isopropylmalate, via the formation of 2-isopropylmaleate. The polypeptide is 3-isopropylmalate dehydratase large subunit (Campylobacter jejuni subsp. jejuni serotype O:6 (strain 81116 / NCTC 11828)).